The following is a 416-amino-acid chain: Alpha-1,3/1,6-mannosyltransferase ALG2 (416 aa).

Over M1 to R84 the chain is Cytoplasmic. An intramembrane region (helical) is located at residues G85–A105. The Cytoplasmic portion of the chain corresponds to D106–V416.

Belongs to the glycosyltransferase group 1 family. Glycosyltransferase 4 subfamily.

It localises to the endoplasmic reticulum membrane. The enzyme catalyses a beta-D-Man-(1-&gt;4)-beta-D-GlcNAc-(1-&gt;4)-alpha-D-GlcNAc-diphospho-di-trans,poly-cis-dolichol + GDP-alpha-D-mannose = an alpha-D-Man-(1-&gt;3)-beta-D-Man-(1-&gt;4)-beta-D-GlcNAc-(1-&gt;4)-alpha-D-GlcNAc-diphospho-di-trans,poly-cis-dolichol + GDP + H(+). It catalyses the reaction an alpha-D-Man-(1-&gt;3)-beta-D-Man-(1-&gt;4)-beta-D-GlcNAc-(1-&gt;4)-alpha-D-GlcNAc-diphospho-di-trans,poly-cis-dolichol + GDP-alpha-D-mannose = an alpha-D-Man-(1-&gt;3)-[alpha-D-Man-(1-&gt;6)]-beta-D-Man-(1-&gt;4)-beta-D-GlcNAc-(1-&gt;4)-alpha-D-GlcNAc-diphospho-di-trans,poly-cis-dolichol + GDP + H(+). The catalysed reaction is a beta-D-Man-(1-&gt;4)-beta-D-GlcNAc-(1-&gt;4)-alpha-D-GlcNAc-diphospho-di-trans,poly-cis-dolichol + GDP-alpha-D-mannose = an alpha-D-Man-(1-&gt;6)-beta-D-Man-(1-&gt;4)-beta-D-GlcNAc-(1-&gt;4)-alpha-D-GlcNAc-diphospho-di-trans,poly-cis-dolichol + GDP + H(+). It carries out the reaction an alpha-D-Man-(1-&gt;6)-beta-D-Man-(1-&gt;4)-beta-D-GlcNAc-(1-&gt;4)-alpha-D-GlcNAc-diphospho-di-trans,poly-cis-dolichol + GDP-alpha-D-mannose = an alpha-D-Man-(1-&gt;3)-[alpha-D-Man-(1-&gt;6)]-beta-D-Man-(1-&gt;4)-beta-D-GlcNAc-(1-&gt;4)-alpha-D-GlcNAc-diphospho-di-trans,poly-cis-dolichol + GDP + H(+). It participates in protein modification; protein glycosylation. Its function is as follows. Mannosyltransferase that operates in the biosynthetic pathway of dolichol-linked oligosaccharides, the glycan precursors employed in protein asparagine (N)-glycosylation. The assembly of dolichol-linked oligosaccharides begins on the cytosolic side of the endoplasmic reticulum membrane and finishes in its lumen. The sequential addition of sugars to dolichol pyrophosphate produces dolichol-linked oligosaccharides containing fourteen sugars, including two GlcNAcs, nine mannoses and three glucoses. Once assembled, the oligosaccharide is transferred from the lipid to nascent proteins by oligosaccharyltransferases. Catalyzes, on the cytoplasmic face of the endoplasmic reticulum, the addition of the second and third mannose residues to the dolichol-linked oligosaccharide chain, to produce Man3GlcNAc(2)-PP-dolichol core oligosaccharide. Man3GlcNAc(2)-PP-dolichol is a substrate for ALG11, the following enzyme in the biosynthetic pathway. While both alpha 1,3 and alpha 1,6 linkages are possible, the sequential addition of alpha 1,3 followed by alpha 1,6 is probably the preferred route. The sequence is that of Alpha-1,3/1,6-mannosyltransferase ALG2 (ALG2) from Homo sapiens (Human).